A 342-amino-acid polypeptide reads, in one-letter code: Lipopolysaccharide heptosyltransferase 1 (342 aa).

8 residues coordinate ADP-L-glycero-beta-D-manno-heptose: Ser188, Ser189, Lys193, Glu225, Asp268, Ser269, Gly270, and His273.

Belongs to the glycosyltransferase 9 family.

It localises to the cell inner membrane. It carries out the reaction an alpha-Kdo-(2-&gt;4)-alpha-Kdo-(2-&gt;6)-lipid A + ADP-L-glycero-beta-D-manno-heptose = an L-alpha-D-Hep-(1-&gt;5)-[alpha-Kdo-(2-&gt;4)]-alpha-Kdo-(2-&gt;6)-lipid A + ADP + H(+). It participates in bacterial outer membrane biogenesis; LPS core biosynthesis. In terms of biological role, glycosyltransferase involved in the biosynthesis of the core oligosaccharide region of lipopolysaccharide (LPS). Catalyzes the addition of the first heptose unit to one 3-deoxy-D-manno-octulosonic acid (Kdo) residue of the Kdo2-lipid A module. This chain is Lipopolysaccharide heptosyltransferase 1, found in Campylobacter coli.